Consider the following 131-residue polypeptide: Translation initiation factor 5A (131 aa).

A Hypusine modification is found at Lys36.

This sequence belongs to the eIF-5A family.

It localises to the cytoplasm. Its function is as follows. Functions by promoting the formation of the first peptide bond. The chain is Translation initiation factor 5A (eIF5A) from Saccharolobus islandicus (strain Y.N.15.51 / Yellowstone #2) (Sulfolobus islandicus).